A 90-amino-acid polypeptide reads, in one-letter code: Translation initiation factor IF-1 2 (90 aa).

In terms of domain architecture, S1-like spans 1-72; that stretch reads MAKEELLELD…TKGRINFRHK (72 aa).

Belongs to the IF-1 family. In terms of assembly, component of the 30S ribosomal translation pre-initiation complex which assembles on the 30S ribosome in the order IF-2 and IF-3, IF-1 and N-formylmethionyl-tRNA(fMet); mRNA recruitment can occur at any time during PIC assembly.

It localises to the cytoplasm. Functionally, one of the essential components for the initiation of protein synthesis. Stabilizes the binding of IF-2 and IF-3 on the 30S subunit to which N-formylmethionyl-tRNA(fMet) subsequently binds. Helps modulate mRNA selection, yielding the 30S pre-initiation complex (PIC). Upon addition of the 50S ribosomal subunit IF-1, IF-2 and IF-3 are released leaving the mature 70S translation initiation complex. This Paraburkholderia xenovorans (strain LB400) protein is Translation initiation factor IF-1 2.